The following is a 520-amino-acid chain: Maturase K (520 aa).

It belongs to the intron maturase 2 family. MatK subfamily.

It localises to the plastid. The protein resides in the chloroplast. In terms of biological role, usually encoded in the trnK tRNA gene intron. Probably assists in splicing its own and other chloroplast group II introns. In Linum perenne (Perennial flax), this protein is Maturase K.